Reading from the N-terminus, the 64-residue chain is Small, acid-soluble spore protein H (64 aa).

Belongs to the SspH family.

It localises to the spore core. This is Small, acid-soluble spore protein H from Acetivibrio thermocellus (strain ATCC 27405 / DSM 1237 / JCM 9322 / NBRC 103400 / NCIMB 10682 / NRRL B-4536 / VPI 7372) (Clostridium thermocellum).